The sequence spans 583 residues: MPRGLELLIAQTILQGFDAQYGRFLEVTSGAQQRFEQADWHAVQQAMKSRIHLYDHHVGLVVEQLRCITDGKSTDADFLLRVKEHYTRLLPDYPRFEIAESFFNSVYCRLFDHRSLTPERLFIFSSQPERRFRTIPRPLAKDFFPDHGWETLLMRILSDLPLRLPWQNKSRDIRYIIAHLTETLGEDALPRCHVQVANELFYRNKAAWLVGKLTTPDGTLPFLLPIHRTDEGELFVDTCLTTTAEASIVFGFARSYFMVYAPLPAALVEWLREILPGKTTAELYMAIGCQKHAKTESYREYLCYLAESDEKFIEAPGIRGMVMLVFTLPGFDRVFKIIKDKFAPQKEMSAAHVRACYQLVKEHDRVGRMADTQEFENFVLDKRQIDPALMALLRQEAPEKITDLGEHIVIRHLYIERRMVPLNIWLEQVEGQQLRDAIEEYGNAIRQLAAANIFPGDMLFKNFGVTRHGRVVFYDYDEICYMTEVNFRDIPPARYPEDELASEPWYSVSPGDVFPEEFRHWLCADPRIGPLFEEMHADLFRADYWRALQTRIKEGHVEDVYAYRRRQRFSVRYGAISSTANSS.

ATP-binding positions include 315–321 (APGIRGM) and Lys-336. The active site involves Asp-371.

The protein belongs to the AceK family.

Its subcellular location is the cytoplasm. It carries out the reaction L-seryl-[isocitrate dehydrogenase] + ATP = O-phospho-L-seryl-[isocitrate dehydrogenase] + ADP + H(+). Functionally, bifunctional enzyme which can phosphorylate or dephosphorylate isocitrate dehydrogenase (IDH) on a specific serine residue. This is a regulatory mechanism which enables bacteria to bypass the Krebs cycle via the glyoxylate shunt in response to the source of carbon. When bacteria are grown on glucose, IDH is fully active and unphosphorylated, but when grown on acetate or ethanol, the activity of IDH declines drastically concomitant with its phosphorylation. The sequence is that of Isocitrate dehydrogenase kinase/phosphatase from Salmonella paratyphi C (strain RKS4594).